Reading from the N-terminus, the 190-residue chain is NADH-dependent phenylglyoxylate dehydrogenase subunit gamma (190 aa).

As to quaternary structure, dimer of heteropentamers composed of an alpha (PadG), a beta (PadI), a gamma (PadE), a delta (PadF) and an epsilon (PadH) subunit.

It carries out the reaction phenylglyoxylate + NAD(+) + CoA = benzoyl-CoA + CO2 + NADH. Its activity is regulated as follows. Activated by magnesium ions and thiamine diphosphate. Its function is as follows. Involved in the anaerobic metabolism of phenylalanine and phenylacetate. Catalyzes the oxidative decarboxylation of phenylglyoxylate to benzoyl-CoA and CO(2). It can also react slowly with 2-oxo-3-methylbutanoate and use different electron acceptors such as benzyl viologen, methyl viologen, FAD or FMN, but NAD seems to be the physiological electron acceptor. Also catalyzes an isotope exchange between CO(2) and the carboxyl group which proves partial or complete reversibility of the oxidative decarboxylation reaction. This is NADH-dependent phenylglyoxylate dehydrogenase subunit gamma (padE) from Aromatoleum evansii (Azoarcus evansii).